The chain runs to 184 residues: Dual specificity protein phosphatase 22 (184 aa).

G2 carries N-myristoyl glycine lipidation. The Tyrosine-protein phosphatase domain maps to 4–144 (GMNKILPGLY…LQEFEKHEVH (141 aa)). S58 carries the post-translational modification Phosphoserine. The active-site Phosphocysteine intermediate is the C88. Positions 89, 90, 92, 93, and 94 each coordinate a protein.

The protein belongs to the protein-tyrosine phosphatase family. Non-receptor class dual specificity subfamily. Monomer. Interacts with LCK; the interaction is direct. Interacts with UBR2; the interaction is direct. Myristoylation regulates subcellular location, and is necessary for activation of JNK. As to expression, ubiquitous. Highest expression seen in heart, placenta, lung, liver, kidney and pancreas.

Its subcellular location is the cytoplasm. It carries out the reaction O-phospho-L-tyrosyl-[protein] + H2O = L-tyrosyl-[protein] + phosphate. The catalysed reaction is O-phospho-L-seryl-[protein] + H2O = L-seryl-[protein] + phosphate. It catalyses the reaction O-phospho-L-threonyl-[protein] + H2O = L-threonyl-[protein] + phosphate. Dual specificity phosphatase; can dephosphorylate both phosphotyrosine and phosphoserine or phosphothreonine residues. Activates the JNK signaling pathway. Inhibits T-cell receptor signaling and T-cell mediated immune responses, acting, at least in part, by inducing degradation of E3 ubiquitin ligase UBR2. Dephosphorylates and thereby induces 'Lys-48'-linked ubiquitination of UBR2, leading to proteasomal degradation of UBR2. Dephosphorylates and thereby inactivates tyrosine kinase LCK. Inhibits UBR2-mediated 'Lys-63'-linked ubiquitination of LCK. May play a role in B-cell receptor (BCR) signaling and B-cell function. The chain is Dual specificity protein phosphatase 22 (DUSP22) from Homo sapiens (Human).